A 452-amino-acid chain; its full sequence is Nuclear distribution protein PAC1 (452 aa).

The 33-residue stretch at 12 to 44 (QKDELHKAILAYFSASGLSNTGAALREELGVGD) folds into the LisH domain. A coiled-coil region spans residues 64–91 (TGVLRLQKKIMELESRLSSLQSELDSAT). 8 WD repeats span residues 117 to 158 (SHRN…RTVK), 160 to 200 (HTKA…KNIR), 204 to 245 (GHDH…CVKT), 248 to 287 (GHSD…HKAT), 290 to 350 (GHEH…LKTL), 352 to 391 (GHDN…RCVK), 396 to 435 (AHSH…INVR), and 437 to 452 (VIAT…VFAS).

This sequence belongs to the WD repeat LIS1/nudF family. As to quaternary structure, self-associates. Interacts with NDL1 and dynein.

It localises to the cytoplasm. The protein resides in the cytoskeleton. It is found in the spindle pole. In terms of biological role, positively regulates the activity of the minus-end directed microtubule motor protein dynein. May enhance dynein-mediated microtubule sliding by targeting dynein to the microtubule plus end. Required for nuclear migration during vegetative growth as well as development. Required for retrograde early endosome (EE) transport from the hyphal tip. Required for localization of dynein to the mitotic spindle poles. Recruits additional proteins to the dynein complex at SPBs. The sequence is that of Nuclear distribution protein PAC1 from Tuber melanosporum (strain Mel28) (Perigord black truffle).